The sequence spans 89 residues: Sugar transporter SemiSWEET (89 aa).

The next 3 membrane-spanning stretches (helical) occupy residues 4 to 27 (ILLT…IKTI), 35 to 55 (ISVV…AYGI), and 60 to 82 (FAVL…ITLI). Residues 7-59 (TGLFAAFFTTFAFAPQSIKTIRTRNTEGISVVMYIMFLTGVISWIAYGIMRSD) enclose the PQ-loop domain.

Homodimer.

The protein localises to the cell membrane. The homodimer mediates transmembrane sugar transport down a concentration gradient. Transport is probably effected by rocking-type movements, where a cargo-binding cavity opens first on one and then on the other side of the membrane. The protein is Sugar transporter SemiSWEET of Escherichia coli (strain UMEA 3162-1).